The chain runs to 150 residues: SsrA-binding protein (150 aa).

Belongs to the SmpB family.

Its subcellular location is the cytoplasm. Its function is as follows. Required for rescue of stalled ribosomes mediated by trans-translation. Binds to transfer-messenger RNA (tmRNA), required for stable association of tmRNA with ribosomes. tmRNA and SmpB together mimic tRNA shape, replacing the anticodon stem-loop with SmpB. tmRNA is encoded by the ssrA gene; the 2 termini fold to resemble tRNA(Ala) and it encodes a 'tag peptide', a short internal open reading frame. During trans-translation Ala-aminoacylated tmRNA acts like a tRNA, entering the A-site of stalled ribosomes, displacing the stalled mRNA. The ribosome then switches to translate the ORF on the tmRNA; the nascent peptide is terminated with the 'tag peptide' encoded by the tmRNA and targeted for degradation. The ribosome is freed to recommence translation, which seems to be the essential function of trans-translation. The sequence is that of SsrA-binding protein from Bacteroides thetaiotaomicron (strain ATCC 29148 / DSM 2079 / JCM 5827 / CCUG 10774 / NCTC 10582 / VPI-5482 / E50).